The following is a 314-amino-acid chain: Acetaldehyde dehydrogenase 1 (314 aa).

11–14 (SGNI) provides a ligand contact to NAD(+). Cys-129 acts as the Acyl-thioester intermediate in catalysis. Residues 160 to 168 (SAGPGTRAN) and Asn-292 each bind NAD(+).

Belongs to the acetaldehyde dehydrogenase family.

The enzyme catalyses acetaldehyde + NAD(+) + CoA = acetyl-CoA + NADH + H(+). This is Acetaldehyde dehydrogenase 1 from Nocardioides sp. (strain ATCC BAA-499 / JS614).